The chain runs to 209 residues: V-type ATP synthase subunit D (209 aa).

Belongs to the V-ATPase D subunit family.

Its function is as follows. Produces ATP from ADP in the presence of a proton gradient across the membrane. The polypeptide is V-type ATP synthase subunit D (Anaeromyxobacter dehalogenans (strain 2CP-1 / ATCC BAA-258)).